A 424-amino-acid chain; its full sequence is UDP-N-acetylglucosamine 1-carboxyvinyltransferase (424 aa).

K22–N23 is a phosphoenolpyruvate binding site. R93 contacts UDP-N-acetyl-alpha-D-glucosamine. The Proton donor role is filled by C117. C117 bears the 2-(S-cysteinyl)pyruvic acid O-phosphothioketal mark. UDP-N-acetyl-alpha-D-glucosamine is bound by residues K162–V165, D307, and I329.

It belongs to the EPSP synthase family. MurA subfamily.

It is found in the cytoplasm. It catalyses the reaction phosphoenolpyruvate + UDP-N-acetyl-alpha-D-glucosamine = UDP-N-acetyl-3-O-(1-carboxyvinyl)-alpha-D-glucosamine + phosphate. It functions in the pathway cell wall biogenesis; peptidoglycan biosynthesis. Functionally, cell wall formation. Adds enolpyruvyl to UDP-N-acetylglucosamine. The sequence is that of UDP-N-acetylglucosamine 1-carboxyvinyltransferase from Actinobacillus pleuropneumoniae serotype 3 (strain JL03).